Here is a 408-residue protein sequence, read N- to C-terminus: Cytochrome bc1 complex Rieske iron-sulfur subunit (408 aa).

3 helical membrane passes run V56–F76, M98–V118, and L162–M182. Residues H293–I390 form the Rieske domain. The [2Fe-2S] cluster site is built by C333, H335, C352, and H355. Cysteines 338 and 354 form a disulfide.

The protein belongs to the Rieske iron-sulfur protein family. As to quaternary structure, the cytochrome bc1 complex is composed of a cytochrome b (QcrB), the Rieske iron-sulfur protein (QcrA) and a diheme cytochrome c (QcrC) subunit. The bc1 complex forms a supercomplex with cytochrome c oxidase (cytochrome aa3). [2Fe-2S] cluster is required as a cofactor.

It is found in the cell membrane. Its function is as follows. Iron-sulfur subunit of the cytochrome bc1 complex, an essential component of the respiratory electron transport chain required for ATP synthesis. The bc1 complex catalyzes the oxidation of menaquinol and the reduction of cytochrome c in the respiratory chain. The bc1 complex operates through a Q-cycle mechanism that couples electron transfer to generation of the proton gradient that drives ATP synthesis. This is Cytochrome bc1 complex Rieske iron-sulfur subunit (qcrA) from Corynebacterium glutamicum (strain ATCC 13032 / DSM 20300 / JCM 1318 / BCRC 11384 / CCUG 27702 / LMG 3730 / NBRC 12168 / NCIMB 10025 / NRRL B-2784 / 534).